A 173-amino-acid chain; its full sequence is uncharacterized protein (173 aa).

The N-acetyltransferase domain maps to 4 to 173 (VKIVQVSEKD…TDFLLKKALV (170 aa)). Residues 97-99 (IYL), 106-110 (RGLGK), and 136-138 (NEN) contribute to the acetyl-CoA site.

This is an uncharacterized protein from Lactobacillus delbrueckii subsp. lactis.